Here is a 506-residue protein sequence, read N- to C-terminus: Aldehyde dehydrogenase (506 aa).

240–245 contributes to the NAD(+) binding site; that stretch reads GSTEIG. Catalysis depends on residues Glu-262 and Cys-301.

Belongs to the aldehyde dehydrogenase family.

The catalysed reaction is an aldehyde + NAD(+) + H2O = a carboxylate + NADH + 2 H(+). It participates in alcohol metabolism; ethanol degradation; acetate from ethanol: step 2/2. Its function is as follows. May be involved in V.cholerae virulence, as its expression is under the control of ToxR, a transcriptional activator of several genes associated with virulence. This chain is Aldehyde dehydrogenase (aldA), found in Vibrio cholerae serotype O1 (strain ATCC 39541 / Classical Ogawa 395 / O395).